Reading from the N-terminus, the 565-residue chain is UvrABC system protein C (565 aa).

Residues 12 to 89 (EEPGVYIFKN…IRTHKPKYNV (78 aa)) enclose the GIY-YIG domain. The UVR domain maps to 195–230 (KDVLPTLYEKIEQYASNLAFEKAAFLRDQVLVLQNI).

It belongs to the UvrC family. Interacts with UvrB in an incision complex.

It is found in the cytoplasm. In terms of biological role, the UvrABC repair system catalyzes the recognition and processing of DNA lesions. UvrC both incises the 5' and 3' sides of the lesion. The N-terminal half is responsible for the 3' incision and the C-terminal half is responsible for the 5' incision. The polypeptide is UvrABC system protein C (Hydrogenobaculum sp. (strain Y04AAS1)).